Consider the following 296-residue polypeptide: NAD kinase (296 aa).

The active-site Proton acceptor is the aspartate 73. NAD(+)-binding positions include 73 to 74, lysine 78, 151 to 152, arginine 178, aspartate 180, and 191 to 196; these read DG, NE, and TAHAMS.

Belongs to the NAD kinase family. It depends on a divalent metal cation as a cofactor.

It localises to the cytoplasm. It carries out the reaction NAD(+) + ATP = ADP + NADP(+) + H(+). Its function is as follows. Involved in the regulation of the intracellular balance of NAD and NADP, and is a key enzyme in the biosynthesis of NADP. Catalyzes specifically the phosphorylation on 2'-hydroxyl of the adenosine moiety of NAD to yield NADP. This chain is NAD kinase, found in Francisella tularensis subsp. holarctica (strain FTNF002-00 / FTA).